Consider the following 288-residue polypeptide: 4-hydroxybenzoate octaprenyltransferase (288 aa).

The next 6 helical transmembrane spans lie at 33-53 (LWALWVASPGVPPLWILAVFV), 99-119 (LFIVLVLLSFLLVLTLNTMTI), 163-183 (ESLPLSCWLMFLANILWAVAY), 213-233 (LIIGILQVAVLALMGAVGWLN), 234-254 (GLGWEYYWSLFVAAGLFGWQQ), and 268-288 (AFMNNNYVGLVLFLGLAMSYL).

It belongs to the UbiA prenyltransferase family. Requires Mg(2+) as cofactor.

The protein resides in the cell inner membrane. The enzyme catalyses all-trans-octaprenyl diphosphate + 4-hydroxybenzoate = 4-hydroxy-3-(all-trans-octaprenyl)benzoate + diphosphate. Its pathway is cofactor biosynthesis; ubiquinone biosynthesis. Its function is as follows. Catalyzes the prenylation of para-hydroxybenzoate (PHB) with an all-trans polyprenyl group. Mediates the second step in the final reaction sequence of ubiquinone-8 (UQ-8) biosynthesis, which is the condensation of the polyisoprenoid side chain with PHB, generating the first membrane-bound Q intermediate 3-octaprenyl-4-hydroxybenzoate. This Klebsiella pneumoniae subsp. pneumoniae (strain ATCC 700721 / MGH 78578) protein is 4-hydroxybenzoate octaprenyltransferase.